A 326-amino-acid chain; its full sequence is MREVLLSECIDLLYESHFVISKPFGRSCFDLIAKKGNLRLLIKILKNIDSLSTEQSEELLNISKMLQAVPVIIGTRTRNSVMEEGAVYERYGIKAVTFNTFREQLVGEPPVVYANRGGFFVNIDGKVLRETREKLKISVGELAEVSRVSRKTIYKYEQNEANPSAEVAIKIEEYLDVPLIKGINIMDCIDGLKSQKSRDDAFEKILKEGEDFKIRVIDILGDMGFNLLETTKAPFDAVAEESKGEDAENQNIIFTNIQETENEEIRRKAMIVDEISKILNSHSLLVLEKKTNENKRITSMSISELEKIGDTVDLLDFIEKRKKSTK.

Residues 128-183 form the HTH cro/C1-type domain; the sequence is LRETREKLKISVGELAEVSRVSRKTIYKYEQNEANPSAEVAIKIEEYLDVPLIKGI. The H-T-H motif DNA-binding region spans 139 to 158; it reads VGELAEVSRVSRKTIYKYEQ.

The polypeptide is Putative HTH-type transcriptional regulatory protein MMP0678 (Methanococcus maripaludis (strain DSM 14266 / JCM 13030 / NBRC 101832 / S2 / LL)).